The primary structure comprises 613 residues: RUN domain-containing protein 1 (613 aa).

A disordered region spans residues 15–36 (AAVGPKAKDEEEEEEEPLPPCE). Thr54 carries the post-translational modification Phosphothreonine. Residues 57–69 (LEEATAEEPGAAP) are compositionally biased toward low complexity. 3 disordered regions span residues 57–79 (LEEATAEEPGAAPGSPPDSPGRT), 140–177 (YEGPGDPASDEGDGLPGDRPWLRGEDQSEQEKQERLET), and 305–330 (GKTGNGCSRTGSSRTPPGNSKTKAED). Ser71 and Ser75 each carry phosphoserine. Basic and acidic residues predominate over residues 159–177 (PWLRGEDQSEQEKQERLET). A coiled-coil region spans residues 160–235 (WLRGEDQSEQ…IKKLDMNLNE (76 aa)). A compositionally biased stretch (polar residues) spans 309 to 325 (NGCSRTGSSRTPPGNSK). In terms of domain architecture, RUN spans 421–602 (ELTMAVRKEL…LKFSLPVDLA (182 aa)). Position 497 is a phosphoserine (Ser497).

Functionally, may play a role as p53/TP53 inhibitor and thus may have oncogenic activity. This chain is RUN domain-containing protein 1 (RUNDC1), found in Homo sapiens (Human).